Consider the following 219-residue polypeptide: MKKEFIMLLLLLQTIMNLNSINTNTSTSIVKELQKNLYIFNSKEYQKDKDTLNEFINSININDKEILQSLEKIKNELFIISVFFNNKKGILIALNLGAEINFKYKISPISISIINNEFEITKILIDYGISLNQIDDTGYSPIFWAIYTNNEKIFEFLKESGADLSFTLKNRKTPMQAAIETENIKLIKSLEKKKIYIDDNFKKKLKKLKNKEIVRILVK.

ANK repeat units follow at residues 104–133, 137–166, and 170–199; these read YKIS…SLNQ, TGYS…DLSF, and NRKT…YIDD.

The protein is Putative ankyrin repeat protein BB_0399 of Borreliella burgdorferi (strain ATCC 35210 / DSM 4680 / CIP 102532 / B31) (Borrelia burgdorferi).